A 636-amino-acid polypeptide reads, in one-letter code: Transcription termination factor FttA (636 aa).

A KHa region spans residues 3–70; sequence SEMLEEIKRT…IIIRSDRSVL (68 aa). A KHb region spans residues 71 to 138; it reads MDPEKAIRKI…WAPKILRTPP (68 aa). Residues 179–383 form a metallo-beta-lactamase N-terminus region; it reads WARLTAMGGF…LVMESTYGGH (205 aa). 6 residues coordinate Zn(2+): His-242, His-244, Asp-246, His-247, His-329, and Asp-352. The tract at residues 384-577 is beta-Casp; that stretch reads EDVQPSRNRA…MNIKTIEGFS (194 aa). The tract at residues 578-636 is metallo-beta-lactamase C-terminus; it reads GHSDRRQLMEYVKRISPKPEKILLCHGDNYKTLDLASSIYRTYRIETKTPLNLETVRIQ. His-603 serves as a coordination point for Zn(2+).

The protein belongs to the metallo-beta-lactamase superfamily. RNA-metabolizing metallo-beta-lactamase-like family. FttA subfamily. Homodimer. Interacts with RNA polymerase (RNAP), interacts with the Spt4-Spt5 complex. Does not seem to interact with the RNA degrading exosome. Requires Zn(2+) as cofactor.

Most active at 0.5 M or 0.7 M NaCl, less active at 1.0 M NaCl. Nuclease activity is inhibited by N,N,Tetrakis-(2-pyridylmethyl)-ethylene diamine (TPEN), a specific chelator of zinc ions. In terms of biological role, terminates transcription on the whole genome. Termination is linked to FttA-mediated RNA cleavage and does not require NTP hydrolysis. Cleaves endonucleolytically at the RNA exit channel of RNA polymerase (RNAP); the 5'-3' exonuclease activity of this protein degrades the nascent RNA released from RNAP. Its function is as follows. An RNA nuclease, it bind single-stranded RNA (ssRNA) with a preference for U-rich sequences. The protein is Transcription termination factor FttA of Methanothermobacter thermautotrophicus (strain ATCC 29096 / DSM 1053 / JCM 10044 / NBRC 100330 / Delta H) (Methanobacterium thermoautotrophicum).